Reading from the N-terminus, the 596-residue chain is Arginine--tRNA ligase (596 aa).

The short motif at 128 to 138 is the 'HIGH' region element; it reads ANPTSSLHVGH.

Belongs to the class-I aminoacyl-tRNA synthetase family. In terms of assembly, monomer.

It localises to the cytoplasm. It catalyses the reaction tRNA(Arg) + L-arginine + ATP = L-arginyl-tRNA(Arg) + AMP + diphosphate. This Acinetobacter baumannii (strain AB307-0294) protein is Arginine--tRNA ligase.